Here is a 446-residue protein sequence, read N- to C-terminus: Movement protein TGB1 (446 aa).

The interval 40-60 (NKLDKRLQNTRKKNKNKEKTR) is disordered. Residues 160-303 (KACCKKERNQ…WLHVPIVFSS (144 aa)) enclose the (+)RNA virus helicase ATP-binding domain. An ATP-binding site is contributed by 193–200 (GVPGSGKS). One can recognise a (+)RNA virus helicase C-terminal domain in the interval 304-444 (DSSHRFGPET…CYGEEHRPDE (141 aa)).

This sequence belongs to the virgaviridae/benyvirus TGB1 movement protein family. Homooligomer. Interacts with movement protein TGB3. TGB1-TGB3-TGB2 complex formation is enhanced by ATP hydrolysis. Interacts with the suppressor of RNA silencing (via N-terminus). Requires Mg(2+) as cofactor.

It is found in the host cell junction. The protein localises to the host plasmodesma. It localises to the host nucleus. The protein resides in the host cytoplasm. Its subcellular location is the host nucleolus. It is found in the host cytoskeleton. The catalysed reaction is ATP + H2O = ADP + phosphate + H(+). In terms of biological role, participates in the transport of viral genome to neighboring plant cells directly through plasmodesmata, without any budding. Multifunctional movement protein with RNA-binding, ATPase and helicase activities. Engages in homologous interactions leading to the formation of a ribonucleoprotein complex containing plus-sense viral RNAs (vRNPs). ATPase activity is probably required for vRNPs movement complex assembly. Intracellular delivery of TGBp1-containing vRNPs to plasmodesmata is facilitated by TGBp2 and TGBp3. The polypeptide is Movement protein TGB1 (Arachis hypogaea (Peanut)).